Here is a 168-residue protein sequence, read N- to C-terminus: RNA pyrophosphohydrolase (168 aa).

The 152-residue stretch at 8-159 (PYRTCVGVML…KRPVYERVVK (152 aa)) folds into the Nudix hydrolase domain. Positions 47 to 68 (GGVDPGEDTWKAAKRELYEETS) match the Nudix box motif.

The protein belongs to the Nudix hydrolase family. RppH subfamily. Requires a divalent metal cation as cofactor.

Its function is as follows. Accelerates the degradation of transcripts by removing pyrophosphate from the 5'-end of triphosphorylated RNA, leading to a more labile monophosphorylated state that can stimulate subsequent ribonuclease cleavage. The sequence is that of RNA pyrophosphohydrolase from Rhodopseudomonas palustris (strain ATCC BAA-98 / CGA009).